Consider the following 572-residue polypeptide: Arginine--tRNA ligase (572 aa).

The 'HIGH' region signature appears at 122–132; sequence PNLAKEMHVGH.

The protein belongs to the class-I aminoacyl-tRNA synthetase family. Monomer.

The protein resides in the cytoplasm. It carries out the reaction tRNA(Arg) + L-arginine + ATP = L-arginyl-tRNA(Arg) + AMP + diphosphate. This chain is Arginine--tRNA ligase, found in Neisseria gonorrhoeae (strain ATCC 700825 / FA 1090).